Consider the following 601-residue polypeptide: 1-deoxy-D-xylulose-5-phosphate synthase (601 aa).

Thiamine diphosphate is bound by residues His63 and Gly104 to Ser106. Mg(2+) is bound at residue Asp135. Thiamine diphosphate contacts are provided by residues Gly136 to Ser137, Asn164, Tyr272, and Glu353. Asn164 serves as a coordination point for Mg(2+).

This sequence belongs to the transketolase family. DXPS subfamily. In terms of assembly, homodimer. The cofactor is Mg(2+). Requires thiamine diphosphate as cofactor.

It carries out the reaction D-glyceraldehyde 3-phosphate + pyruvate + H(+) = 1-deoxy-D-xylulose 5-phosphate + CO2. It functions in the pathway metabolic intermediate biosynthesis; 1-deoxy-D-xylulose 5-phosphate biosynthesis; 1-deoxy-D-xylulose 5-phosphate from D-glyceraldehyde 3-phosphate and pyruvate: step 1/1. Its function is as follows. Catalyzes the acyloin condensation reaction between C atoms 2 and 3 of pyruvate and glyceraldehyde 3-phosphate to yield 1-deoxy-D-xylulose-5-phosphate (DXP). This is 1-deoxy-D-xylulose-5-phosphate synthase from Aliarcobacter butzleri (strain RM4018) (Arcobacter butzleri).